We begin with the raw amino-acid sequence, 193 residues long: Interleukin-23 subunit alpha (193 aa).

The signal sequence occupies residues 1 to 22 (MLGSRAVMLMLLLLLLPWTSQG).

The protein belongs to the IL-6 superfamily. Heterodimer with IL12B; disulfide-linked. The heterodimer is known as interleukin IL-23. Interacts with IL23R; this interaction enables recruitment of IL12RB1.

Its subcellular location is the secreted. Associates with IL12B to form the pro-inflammatory cytokine IL-23 that plays different roles in innate and adaptive immunity. Released by antigen-presenting cells such as dendritic cells or macrophages, binds to a heterodimeric receptor complex composed of IL12RB1 and IL23R to activate JAK2 and TYK2 which then phosphorylate the receptor to form a docking site leading to the phosphorylation of STAT3 and STAT4. This process leads to activation of several pathways including p38 MAPK or NF-kappa-B and promotes the production of pro-inflammatory cytokines such as interleukin-17A/IL17A. In turn, participates in the early and effective intracellular bacterial clearance. Promotes the expansion and survival of T-helper 17 cells, a CD4-positive helper T-cell subset that produces IL-17, as well as other IL-17-producing cells. The sequence is that of Interleukin-23 subunit alpha (IL23A) from Sus scrofa (Pig).